A 1102-amino-acid polypeptide reads, in one-letter code: Voltage-gated delayed rectifier potassium channel KCNH8 (1102 aa).

Residues 1 to 225 lie on the Cytoplasmic side of the membrane; it reads MPVMKGLLAP…HFSTFKAGWD (225 aa). The 73-residue stretch at 18–90 folds into the PAS domain; that stretch reads IATRFDGTHS…LQIEKSLEEK (73 aa). A PAC domain is found at 93 to 145; sequence FKGEIMFYKKNGAPFWCLLDIVPIKNEKGDVVLFLASFKDITDTKVKITSEDK. A helical membrane pass occupies residues 226–246; sequence WLILLATFYVAVTVPYNVCFI. Residues 247 to 255 are Extracellular-facing; the sequence is GNEDLSTTR. Residues 256 to 276 form a helical membrane-spanning segment; sequence STTVSDIAVEILFIIDIILNF. At 277–298 the chain is on the cytoplasmic side; it reads RTTYVSKSGQVIFEARSICIHY. A helical membrane pass occupies residues 299-319; sequence VTTWFIIDLIAALPFDLLYAF. Asn320 carries an N-linked (GlcNAc...) asparagine glycan. Residues 320–327 lie on the Extracellular side of the membrane; it reads NVTVVSLV. Residues 328-348 form a helical; Voltage-sensor membrane-spanning segment; sequence HLLKTVRLLRLLRLLQKLDRY. Over 349–353 the chain is Cytoplasmic; the sequence is SQHST. A helical membrane pass occupies residues 354–374; the sequence is IVLTLLMSMFALLAHWMACIW. The Extracellular segment spans residues 375-419; the sequence is YVIGKMEREDNSLLKWEVGWLHELGKRLESPYYGNNTLGGPSIRS. Asn409 carries an N-linked (GlcNAc...) asparagine glycan. The pore-forming intramembrane region spans 420–440; that stretch reads AYIAALYFTLSSLTSVGFGNV. The short motif at 434-439 is the Selectivity filter element; it reads SVGFGN. The Extracellular segment spans residues 441-448; it reads SANTDAEK. The chain crosses the membrane as a helical span at residues 449–469; it reads IFSICTMLIGALMHALVFGNV. Residues 470–1102 are Cytoplasmic-facing; sequence TAIIQRMYSR…DVKDSKAINV (633 aa). The interval 551–668 is cNMP-binding domain; that stretch reads LFECASRGCL…HKFVEDIQHD (118 aa). Disordered regions lie at residues 683-744, 762-793, 818-845, and 960-983; these read SRLS…KTGS, PFHSPIRVSSANSPKTKQEADPPNHGTRKEKN, EDGNSSEETQTFDFGSEQIRPEPRISPS, and LVGSNPQRTEAHEQSPVDSELHHS. Positions 710-723 are enriched in acidic residues; that stretch reads VEDEEEEEVEEEET. The segment covering 777-793 has biased composition (basic and acidic residues); sequence TKQEADPPNHGTRKEKN. The segment covering 968–982 has biased composition (basic and acidic residues); the sequence is TEAHEQSPVDSELHH.

Belongs to the potassium channel family. H (Eag) (TC 1.A.1.20) subfamily. Kv12.1/KCNH8 sub-subfamily. In terms of assembly, the potassium channel is probably composed of a homo- or heterotetrameric complex of pore-forming alpha subunits that can associate with modulating beta subunits. In terms of tissue distribution, detected in superior cervical, mesenteric and coeliac ganglia. Expressed in brain (piriform cortex, olfactory tubercle, cerebral cortex, hippocampus pyramidial cells and dentate gyrus and basal ganglia of caudate/putamen and accumbens nucleus). Expressed in pituitary.

The protein localises to the membrane. The catalysed reaction is K(+)(in) = K(+)(out). In terms of biological role, pore-forming (alpha) subunit of a voltage-gated delayed rectifier potassium channel that mediates outward-rectifying potassium currents. Elicits a slowly activating, non-inactivating and slowly deactivation outwards potassium current at depolarizating voltages from -30 mV to +50mV. Shows no obvious change in the activation rate from different holding potentials. Activation is strongly dependent on the pH of the external solution. The chain is Voltage-gated delayed rectifier potassium channel KCNH8 from Rattus norvegicus (Rat).